The following is a 147-amino-acid chain: Large ribosomal subunit protein bL9 (147 aa).

This sequence belongs to the bacterial ribosomal protein bL9 family.

Functionally, binds to the 23S rRNA. In Halalkalibacterium halodurans (strain ATCC BAA-125 / DSM 18197 / FERM 7344 / JCM 9153 / C-125) (Bacillus halodurans), this protein is Large ribosomal subunit protein bL9.